The chain runs to 1174 residues: Creatine kinase, flagellar (1174 aa).

Over residues 1–14 the composition is skewed to polar residues; sequence MGCAASSQQTTATG. Positions 1 to 62 are disordered; it reads MGCAASSQQT…PFVEPDPNYP (62 aa). Residues 18-39 are compositionally biased toward low complexity; that stretch reads AAGEKANPAPANNNPNAANKAE. The 87-residue stretch at 53–139 folds into the Phosphagen kinase N-terminal 1 domain; that stretch reads PFVEPDPNYP…FDPTIDKRHN (87 aa). A 1; approximate repeat occupies 61 to 414; the sequence is YPDLSKHNNY…EKALEKGSDI (354 aa). In terms of domain architecture, Phosphagen kinase C-terminal 1 spans 166–408; sequence YVLSCRVRTG…KKLIELEKAL (243 aa). ATP-binding positions include 169-173, histidine 232, arginine 277, and 333-337; these read SCRVR and RAGVH. One can recognise a Phosphagen kinase N-terminal 2 domain in the interval 426-512; that stretch reads RAEQVKEGYP…FDPVIDARHG (87 aa). The stretch at 434 to 787 is one 2; approximate repeat; the sequence is YPDLSKHNNH…EKKLEKGEDI (354 aa). A Phosphagen kinase C-terminal 2 domain is found at 539–781; that stretch reads YVLSCRVRTG…ELLVQMEKKL (243 aa). ATP is bound by residues 542-546, histidine 605, arginine 706, 734-739, and aspartate 749; these read SCRVR and RGTGGV. Positions 800–886 constitute a Phosphagen kinase N-terminal 3 domain; sequence PIKPFSYDYP…FDPVISARHG (87 aa). A 3; approximate repeat occupies 808–1161; sequence YPDFSLHNNW…EKALMKGEDI (354 aa). The 243-residue stretch at 913-1155 folds into the Phosphagen kinase C-terminal 3 domain; it reads FVLSCRVRTG…KLLVNLEKAL (243 aa).

It belongs to the ATP:guanido phosphotransferase family. Monomer.

It is found in the cytoplasm. It localises to the cytoskeleton. The protein localises to the flagellum axoneme. It carries out the reaction creatine + ATP = N-phosphocreatine + ADP + H(+). Functionally, this axonemal protein participates in an energy shuttle that utilizes phosphocreatine to transfer the energy from ATP generated by the mitochondrion in the sperm head to dynein in the distal portions of the flagellum. In Strongylocentrotus purpuratus (Purple sea urchin), this protein is Creatine kinase, flagellar.